Here is a 269-residue protein sequence, read N- to C-terminus: Seven in absentia homolog 3 (269 aa).

The SIAH-type; degenerate zinc-finger motif lies at 61-132 (GSFHPHHLSH…VVPHLRQIHR (72 aa)). 4 residues coordinate Zn(2+): Cys107, Cys114, His126, and His131.

This sequence belongs to the SINA (Seven in absentia) family.

Its subcellular location is the mitochondrion. Its function is as follows. Negative regulator of PRKN translocation to damaged mitochondria. Acts probably by destabilizing PINK1 protein, hence inhibiting PRKN targeting to dysfunctional depolarized mitochondria. The polypeptide is Seven in absentia homolog 3 (SIAH3) (Homo sapiens (Human)).